A 73-amino-acid chain; its full sequence is UPF0235 protein PERMA_1406 (73 aa).

The protein belongs to the UPF0235 family.

The sequence is that of UPF0235 protein PERMA_1406 from Persephonella marina (strain DSM 14350 / EX-H1).